A 506-amino-acid polypeptide reads, in one-letter code: Probable Xaa-Pro aminopeptidase BDCG_04966 (506 aa).

Mn(2+) is bound by residues D285, D296, E433, and E471.

This sequence belongs to the peptidase M24B family. Requires Mn(2+) as cofactor.

It carries out the reaction Release of any N-terminal amino acid, including proline, that is linked to proline, even from a dipeptide or tripeptide.. Catalyzes the removal of a penultimate prolyl residue from the N-termini of peptides. This is Probable Xaa-Pro aminopeptidase BDCG_04966 from Ajellomyces dermatitidis (strain ER-3 / ATCC MYA-2586) (Blastomyces dermatitidis).